Reading from the N-terminus, the 515-residue chain is GMP synthase [glutamine-hydrolyzing] (515 aa).

One can recognise a Glutamine amidotransferase type-1 domain in the interval 10 to 200 (TIIVLDFGSQ…VFGVCGCSEG (191 aa)). Cysteine 87 (nucleophile) is an active-site residue. Residues histidine 174 and glutamate 176 contribute to the active site. Positions 201 to 390 (WNMENFIEVE…LGIPDEIVWR (190 aa)) constitute a GMPS ATP-PPase domain. ATP is bound at residue 228–234 (SGGVDSS).

As to quaternary structure, homodimer.

It catalyses the reaction XMP + L-glutamine + ATP + H2O = GMP + L-glutamate + AMP + diphosphate + 2 H(+). It participates in purine metabolism; GMP biosynthesis; GMP from XMP (L-Gln route): step 1/1. Its function is as follows. Catalyzes the synthesis of GMP from XMP. This Bacillus anthracis (strain A0248) protein is GMP synthase [glutamine-hydrolyzing].